Reading from the N-terminus, the 355-residue chain is Transcription factor TCP13 (355 aa).

The interval 1–57 is disordered; sequence MNIVSWKDANDEVAGGATTRREREVKEDQEETEVRATSGKTVIKKQPTSISSSSSSW. Residues 74–132 form the TCP domain; it reads GKDRHSKVCTLRGLRDRRVRLSVPTAIQLYDLQERLGVDQPSKAVDWLLDAAKEEIDEL. Residues 329–355 are disordered; it reads TNSTTTANMSRHLGSERCTSRGSDHHM. Residues 341-355 show a composition bias toward basic and acidic residues; sequence LGSERCTSRGSDHHM.

In terms of assembly, interacts with AHL27 and AHL29. Interacts with SPL. Interacts with KIN10; KIN11 and FLZ3. In terms of tissue distribution, expressed in cotyledons, particularly in the vascular region, in leaves, buds, flowers and immature siliques, and, to a lower extent, in roots.

The protein localises to the nucleus. Its subcellular location is the plastid. The protein resides in the chloroplast. Its function is as follows. Plays a pivotal role in the control of morphogenesis of shoot organs by negatively regulating the expression of boundary-specific genes such as CUC genes, probably through the induction of miRNA (e.g. miR164). Binds to the 3'-ACC-5' repeats in the light-responsive promoter (LRP) of psbD, and activates its transcription. Participates in ovule development. This is Transcription factor TCP13 (TCP13) from Arabidopsis thaliana (Mouse-ear cress).